The following is a 66-amino-acid chain: Large ribosomal subunit protein bL33c (66 aa).

The protein belongs to the bacterial ribosomal protein bL33 family.

It is found in the plastid. The protein localises to the chloroplast. The sequence is that of Large ribosomal subunit protein bL33c from Morus indica (Mulberry).